The chain runs to 326 residues: Tetraacyldisaccharide 4'-kinase (326 aa).

Thr55–Thr62 contacts ATP.

Belongs to the LpxK family.

It carries out the reaction a lipid A disaccharide + ATP = a lipid IVA + ADP + H(+). It functions in the pathway glycolipid biosynthesis; lipid IV(A) biosynthesis; lipid IV(A) from (3R)-3-hydroxytetradecanoyl-[acyl-carrier-protein] and UDP-N-acetyl-alpha-D-glucosamine: step 6/6. Transfers the gamma-phosphate of ATP to the 4'-position of a tetraacyldisaccharide 1-phosphate intermediate (termed DS-1-P) to form tetraacyldisaccharide 1,4'-bis-phosphate (lipid IVA). This is Tetraacyldisaccharide 4'-kinase from Serratia proteamaculans (strain 568).